Reading from the N-terminus, the 327-residue chain is Beta-ketoacyl-[acyl-carrier-protein] synthase III (327 aa).

Residues C112 and H253 contribute to the active site. The interval 254–258 (QANER) is ACP-binding. N283 is a catalytic residue.

This sequence belongs to the thiolase-like superfamily. FabH family. Homodimer.

The protein resides in the cytoplasm. It catalyses the reaction malonyl-[ACP] + acetyl-CoA + H(+) = 3-oxobutanoyl-[ACP] + CO2 + CoA. Its pathway is lipid metabolism; fatty acid biosynthesis. Functionally, catalyzes the condensation reaction of fatty acid synthesis by the addition to an acyl acceptor of two carbons from malonyl-ACP. Catalyzes the first condensation reaction which initiates fatty acid synthesis and may therefore play a role in governing the total rate of fatty acid production. Possesses both acetoacetyl-ACP synthase and acetyl transacylase activities. Its substrate specificity determines the biosynthesis of branched-chain and/or straight-chain of fatty acids. This Chlamydia trachomatis serovar A (strain ATCC VR-571B / DSM 19440 / HAR-13) protein is Beta-ketoacyl-[acyl-carrier-protein] synthase III.